The sequence spans 60 residues: Beta-defensin 8 (60 aa).

A signal peptide spans 1-22 (MRIHYLLFTFLLVLLSPLAAFS). A propeptide spanning residues 23–25 (QKI) is cleaved from the precursor. Intrachain disulfides connect Cys31-Cys58, Cys38-Cys52, and Cys42-Cys59.

The protein belongs to the beta-defensin family. As to expression, most highly expressed in testis and heart.

It is found in the secreted. A synthetic peptide displays antimicrobial activities against S.aureus, P.aeruginosa, E.coli and B.cepacia. The antimicrobial activity against S.aureus, E.coli and B.cepacia is reduced in raised concentration of NaCl, but its action against P.aeruginosa is independent of NaCl concentration. This Mus musculus (Mouse) protein is Beta-defensin 8 (Defb8).